The sequence spans 186 residues: Meiotically up-regulated gene 163 protein (186 aa).

The protein localises to the mitochondrion. Its function is as follows. Has a role in meiosis. This Schizosaccharomyces pombe (strain 972 / ATCC 24843) (Fission yeast) protein is Meiotically up-regulated gene 163 protein (mug163).